Here is a 459-residue protein sequence, read N- to C-terminus: uncharacterized protein (459 aa).

The segment at 28–47 (AHDEELTGPPQKPAYAAKPA) is disordered. Residues 35-214 (GPPQKPAYAA…TEVIVKLHPR (180 aa)) form the FAD-binding PCMH-type domain.

Belongs to the oxygen-dependent FAD-linked oxidoreductase family. FAD is required as a cofactor.

This is an uncharacterized protein from Mycobacterium tuberculosis (strain CDC 1551 / Oshkosh).